The primary structure comprises 276 residues: 2-dehydro-3-deoxyphosphooctonate aldolase (276 aa).

This sequence belongs to the KdsA family.

It is found in the cytoplasm. The enzyme catalyses D-arabinose 5-phosphate + phosphoenolpyruvate + H2O = 3-deoxy-alpha-D-manno-2-octulosonate-8-phosphate + phosphate. It participates in carbohydrate biosynthesis; 3-deoxy-D-manno-octulosonate biosynthesis; 3-deoxy-D-manno-octulosonate from D-ribulose 5-phosphate: step 2/3. Its pathway is bacterial outer membrane biogenesis; lipopolysaccharide biosynthesis. This chain is 2-dehydro-3-deoxyphosphooctonate aldolase, found in Chelativorans sp. (strain BNC1).